The primary structure comprises 374 residues: Histidinol-phosphate aminotransferase (374 aa).

The residue at position 211 (K211) is an N6-(pyridoxal phosphate)lysine. Over residues 351–368 (GNSSQDSASKSNSSANND) the composition is skewed to low complexity. The interval 351–374 (GNSSQDSASKSNSSANNDELNASN) is disordered.

It belongs to the class-II pyridoxal-phosphate-dependent aminotransferase family. Histidinol-phosphate aminotransferase subfamily. As to quaternary structure, homodimer. Requires pyridoxal 5'-phosphate as cofactor.

It catalyses the reaction L-histidinol phosphate + 2-oxoglutarate = 3-(imidazol-4-yl)-2-oxopropyl phosphate + L-glutamate. Its pathway is amino-acid biosynthesis; L-histidine biosynthesis; L-histidine from 5-phospho-alpha-D-ribose 1-diphosphate: step 7/9. This is Histidinol-phosphate aminotransferase from Photobacterium profundum (strain SS9).